Reading from the N-terminus, the 226-residue chain is Urease accessory protein UreF (226 aa).

This sequence belongs to the UreF family. UreD, UreF and UreG form a complex that acts as a GTP-hydrolysis-dependent molecular chaperone, activating the urease apoprotein by helping to assemble the nickel containing metallocenter of UreC. The UreE protein probably delivers the nickel.

It localises to the cytoplasm. Functionally, required for maturation of urease via the functional incorporation of the urease nickel metallocenter. The sequence is that of Urease accessory protein UreF from Burkholderia lata (strain ATCC 17760 / DSM 23089 / LMG 22485 / NCIMB 9086 / R18194 / 383).